A 255-amino-acid polypeptide reads, in one-letter code: Pyrroloquinoline-quinone synthase (255 aa).

It belongs to the PqqC family.

It catalyses the reaction 6-(2-amino-2-carboxyethyl)-7,8-dioxo-1,2,3,4,7,8-hexahydroquinoline-2,4-dicarboxylate + 3 O2 = pyrroloquinoline quinone + 2 H2O2 + 2 H2O + H(+). Its pathway is cofactor biosynthesis; pyrroloquinoline quinone biosynthesis. In terms of biological role, ring cyclization and eight-electron oxidation of 3a-(2-amino-2-carboxyethyl)-4,5-dioxo-4,5,6,7,8,9-hexahydroquinoline-7,9-dicarboxylic-acid to PQQ. In Granulibacter bethesdensis (strain ATCC BAA-1260 / CGDNIH1), this protein is Pyrroloquinoline-quinone synthase.